The sequence spans 331 residues: Adenosine deaminase (331 aa).

Zn(2+) contacts are provided by His12 and His14. The substrate site is built by His14, Asp16, and Gly170. His197 serves as a coordination point for Zn(2+). Catalysis depends on Glu200, which acts as the Proton donor. Asp278 is a binding site for Zn(2+). Asp279 is a binding site for substrate.

This sequence belongs to the metallo-dependent hydrolases superfamily. Adenosine and AMP deaminases family. Adenosine deaminase subfamily. It depends on Zn(2+) as a cofactor.

The catalysed reaction is adenosine + H2O + H(+) = inosine + NH4(+). It carries out the reaction 2'-deoxyadenosine + H2O + H(+) = 2'-deoxyinosine + NH4(+). Its function is as follows. Catalyzes the hydrolytic deamination of adenosine and 2-deoxyadenosine. The sequence is that of Adenosine deaminase from Shewanella oneidensis (strain ATCC 700550 / JCM 31522 / CIP 106686 / LMG 19005 / NCIMB 14063 / MR-1).